We begin with the raw amino-acid sequence, 125 residues long: MHKEEHEVAVLGPPPSTILPRSTVINIHSETSVPDHVVWSLFNTLFLNWCCLGFIAFAYSVKSRDRKMVGDVTGAQAYASTAKCLNIWALILGILMTIGFILLLVFGSVTVYHIMLQIIQEKRGY.

Topologically, residues 1-36 (MHKEEHEVAVLGPPPSTILPRSTVINIHSETSVPDH) are cytoplasmic. Residue S16 is modified to Phosphoserine. An intramembrane region (helical) is located at residues 37 to 57 (VVWSLFNTLFLNWCCLGFIAF). 3 S-palmitoyl cysteine lipidation sites follow: C50, C51, and C84. Residues 58 to 86 (AYSVKSRDRKMVGDVTGAQAYASTAKCLN) are Cytoplasmic-facing. The interval 84–125 (CLNIWALILGILMTIGFILLLVFGSVTVYHIMLQIIQEKRGY) is interaction with CAV1. A helical transmembrane segment spans residues 87–107 (IWALILGILMTIGFILLLVFG). Residues 108–125 (SVTVYHIMLQIIQEKRGY) lie on the Extracellular side of the membrane.

This sequence belongs to the CD225/Dispanin family. In terms of assembly, interacts with CD81. Part of a complex composed of CD19, CR2/CD21, CD81 and IFITM1/CD225 in the membrane of mature B-cells. Interacts with CAV1; this interaction enhances the ability of CAV1 in inhibiting ERK activation. Post-translationally, palmitoylation on membrane-proximal cysteines controls clustering in membrane compartments and antiviral activity. In terms of tissue distribution, bone (at protein level). Levels greatly elevated in colon cancer, cervical cancer, esophageal cancer and ovarian cancer. Expressed in glioma cell lines.

It is found in the cell membrane. The protein localises to the lysosome membrane. Functionally, IFN-induced antiviral protein which inhibits the entry of viruses to the host cell cytoplasm, permitting endocytosis, but preventing subsequent viral fusion and release of viral contents into the cytosol. Active against multiple viruses, including influenza A virus, SARS coronaviruses (SARS-CoV and SARS-CoV-2), Marburg virus (MARV), Ebola virus (EBOV), Dengue virus (DNV), West Nile virus (WNV), human immunodeficiency virus type 1 (HIV-1) and hepatitis C virus (HCV). Can inhibit: influenza virus hemagglutinin protein-mediated viral entry, MARV and EBOV GP1,2-mediated viral entry and SARS-CoV and SARS-CoV-2 S protein-mediated viral entry. Also implicated in cell adhesion and control of cell growth and migration. Inhibits SARS-CoV-2 S protein-mediated syncytia formation. Plays a key role in the antiproliferative action of IFN-gamma either by inhibiting the ERK activation or by arresting cell growth in G1 phase in a p53-dependent manner. Acts as a positive regulator of osteoblast differentiation. In hepatocytes, IFITM proteins act in a coordinated manner to restrict HCV infection by targeting the endocytosed HCV virion for lysosomal degradation. IFITM2 and IFITM3 display anti-HCV activity that may complement the anti-HCV activity of IFITM1 by inhibiting the late stages of HCV entry, possibly in a coordinated manner by trapping the virion in the endosomal pathway and targeting it for degradation at the lysosome. This Homo sapiens (Human) protein is Interferon-induced transmembrane protein 1.